We begin with the raw amino-acid sequence, 124 residues long: Putative membrane protein insertion efficiency factor (124 aa).

The span at 1 to 12 (MCPQPHADHAIT) shows a compositional bias: basic and acidic residues. Residues 1–26 (MCPQPHADHAITRGDTGAAGGRNWSG) form a disordered region.

It belongs to the UPF0161 family.

It is found in the cell inner membrane. Functionally, could be involved in insertion of integral membrane proteins into the membrane. This is Putative membrane protein insertion efficiency factor from Rhizobium meliloti (strain 1021) (Ensifer meliloti).